Here is a 257-residue protein sequence, read N- to C-terminus: uncharacterized protein (257 aa).

The chain crosses the membrane as a helical span at residues 7-27 (IGILEIVVILSILITSVSLAY).

It is found in the membrane. This is an uncharacterized protein from Methanocaldococcus jannaschii (strain ATCC 43067 / DSM 2661 / JAL-1 / JCM 10045 / NBRC 100440) (Methanococcus jannaschii).